The chain runs to 239 residues: Ribosomal RNA small subunit methyltransferase G (239 aa).

S-adenosyl-L-methionine-binding positions include Gly77, Phe82, Ala128–Glu129, and Arg147.

It belongs to the methyltransferase superfamily. RNA methyltransferase RsmG family.

The protein localises to the cytoplasm. Its function is as follows. Specifically methylates the N7 position of guanine in position 535 of 16S rRNA. This chain is Ribosomal RNA small subunit methyltransferase G, found in Bacillus anthracis (strain A0248).